A 295-amino-acid chain; its full sequence is Tyrosine recombinase XerD (295 aa).

One can recognise a Core-binding (CB) domain in the interval 1-85; that stretch reads MDTIIEEYLK…TIRSFHQFAL (85 aa). The Tyr recombinase domain maps to 106–289; it reads KLPDVLEINE…SKSQIRKMYN (184 aa). Active-site residues include Arg-146, Lys-170, His-241, Arg-244, and His-267. The active-site O-(3'-phospho-DNA)-tyrosine intermediate is the Tyr-276.

The protein belongs to the 'phage' integrase family. XerD subfamily. In terms of assembly, forms a cyclic heterotetrameric complex composed of two molecules of XerC and two molecules of XerD.

The protein localises to the cytoplasm. Functionally, site-specific tyrosine recombinase, which acts by catalyzing the cutting and rejoining of the recombining DNA molecules. The XerC-XerD complex is essential to convert dimers of the bacterial chromosome into monomers to permit their segregation at cell division. It also contributes to the segregational stability of plasmids. The polypeptide is Tyrosine recombinase XerD (Staphylococcus saprophyticus subsp. saprophyticus (strain ATCC 15305 / DSM 20229 / NCIMB 8711 / NCTC 7292 / S-41)).